The primary structure comprises 312 residues: Malate dehydrogenase (312 aa).

Residues 7-13 (GAAGGIG) and aspartate 34 each bind NAD(+). Substrate contacts are provided by arginine 81 and arginine 87. NAD(+) contacts are provided by residues asparagine 94 and 117–119 (ITN). Positions 119 and 153 each coordinate substrate. Histidine 177 acts as the Proton acceptor in catalysis. Residue methionine 227 coordinates NAD(+).

Belongs to the LDH/MDH superfamily. MDH type 1 family. As to quaternary structure, homodimer.

It carries out the reaction (S)-malate + NAD(+) = oxaloacetate + NADH + H(+). In terms of biological role, catalyzes the reversible oxidation of malate to oxaloacetate. In Escherichia coli O7:K1 (strain IAI39 / ExPEC), this protein is Malate dehydrogenase.